The following is a 242-amino-acid chain: E3 ubiquitin-protein ligase ZNRF2 (242 aa).

The tract at residues 1–141 (MGAKQSGPAA…VGGSPGGPRL (141 aa)) is disordered. The N-myristoyl glycine moiety is linked to residue Gly2. 3 positions are modified to phosphoserine: Ser19, Ser21, and Ser25. The segment covering 19–29 (SGSDLPSSSSG) has biased composition (low complexity). Gly residues predominate over residues 30–41 (GANGTAGGGGGA). The segment covering 59–97 (PSASGGAAAAAAAPAAPAAPRSRSLGGAVGSVASGARAA) has biased composition (low complexity). Ser82, Ser89, Ser113, Ser116, and Ser135 each carry phosphoserine. Over residues 99 to 118 (SPFSIPNSSSGPYGSQDSVH) the composition is skewed to polar residues. Ser145 carries the post-translational modification Phosphoserine; by MTOR. Residues Ser151 and Ser193 each carry the phosphoserine modification. The RING-type; atypical zinc-finger motif lies at 199-240 (CAICLEELQQGDTIARLPCLCIYHKGCIDEWFEVNRSCPEHP).

In terms of assembly, interacts with UBE2N. Interacts with ZNRF1. Interacts (when phosphorylated) with YWHAE. In terms of processing, phosphorylated; leading to binding to YWHAE. Phosphorylated by MTOR at Ser-145 and dephosphorylated by PP6C. Ser-145 phosphorylation stimulates vesicle-to-cytosol translocation. In terms of tissue distribution, highly expressed in the brain, with higher expression during development than in adult. Expressed also in mammary glands, testis, colon and kidney.

Its subcellular location is the endosome membrane. It is found in the lysosome membrane. It localises to the presynaptic cell membrane. The protein localises to the cytoplasm. It carries out the reaction S-ubiquitinyl-[E2 ubiquitin-conjugating enzyme]-L-cysteine + [acceptor protein]-L-lysine = [E2 ubiquitin-conjugating enzyme]-L-cysteine + N(6)-ubiquitinyl-[acceptor protein]-L-lysine.. The protein operates within protein modification; protein ubiquitination. Functionally, E3 ubiquitin-protein ligase that plays a role in the establishment and maintenance of neuronal transmission and plasticity. Ubiquitinates the Na(+)/K(+) ATPase alpha-1 subunit/ATP1A1 and thereby influences its endocytosis and/or degradation. Acts also as a positive regulator of mTORC1 activation by amino acids, which functions upstream of the V-ATPase and of Rag-GTPases. In turn, phosphorylation by mTOR leads to its inhibition via targeting to the cytosol allowing a self-regulating feedback mechanism. In Homo sapiens (Human), this protein is E3 ubiquitin-protein ligase ZNRF2 (ZNRF2).